A 149-amino-acid chain; its full sequence is Nucleoside diphosphate kinase (149 aa).

Residues Lys-9, Phe-57, Arg-85, Thr-91, Arg-102, and Asn-112 each coordinate ATP. The active-site Pros-phosphohistidine intermediate is His-115.

The protein belongs to the NDK family. Mg(2+) is required as a cofactor.

The protein localises to the cytoplasm. The enzyme catalyses a 2'-deoxyribonucleoside 5'-diphosphate + ATP = a 2'-deoxyribonucleoside 5'-triphosphate + ADP. It catalyses the reaction a ribonucleoside 5'-diphosphate + ATP = a ribonucleoside 5'-triphosphate + ADP. Major role in the synthesis of nucleoside triphosphates other than ATP. The ATP gamma phosphate is transferred to the NDP beta phosphate via a ping-pong mechanism, using a phosphorylated active-site intermediate. The chain is Nucleoside diphosphate kinase from Methanocorpusculum labreanum (strain ATCC 43576 / DSM 4855 / Z).